The following is a 334-amino-acid chain: Phosphate acyltransferase (334 aa).

This sequence belongs to the PlsX family. As to quaternary structure, homodimer. Probably interacts with PlsY.

The protein resides in the cytoplasm. The enzyme catalyses a fatty acyl-[ACP] + phosphate = an acyl phosphate + holo-[ACP]. Its pathway is lipid metabolism; phospholipid metabolism. Catalyzes the reversible formation of acyl-phosphate (acyl-PO(4)) from acyl-[acyl-carrier-protein] (acyl-ACP). This enzyme utilizes acyl-ACP as fatty acyl donor, but not acyl-CoA. The chain is Phosphate acyltransferase from Caldicellulosiruptor saccharolyticus (strain ATCC 43494 / DSM 8903 / Tp8T 6331).